The sequence spans 390 residues: Dynein regulatory complex subunit 5 (390 aa).

LRR repeat units follow at residues 182–205 (TETL…MLAS), 210–233 (NLSI…ALAK), and 238–261 (HSVI…SLAR).

The protein belongs to the DRC5 family. In terms of assembly, component of the nexin-dynein regulatory complex (N-DRC). Interacts with DRC1, DRC2, DRC3, DRC4, DRC7 and DRC11.

It localises to the cell projection. It is found in the cilium. The protein resides in the flagellum. Its subcellular location is the cytoplasm. The protein localises to the cytoskeleton. It localises to the flagellum axoneme. In terms of biological role, component of the nexin-dynein regulatory complex (N-DRC) a key regulator of ciliary/flagellar motility which maintains the alignment and integrity of the distal axoneme and regulates microtubule sliding in motile axonemes. May play a role in the assembly of N-DRC. This Chlamydomonas reinhardtii (Chlamydomonas smithii) protein is Dynein regulatory complex subunit 5.